The sequence spans 178 residues: Large ribosomal subunit protein uL10 (178 aa).

This sequence belongs to the universal ribosomal protein uL10 family. As to quaternary structure, part of the ribosomal stalk of the 50S ribosomal subunit. The N-terminus interacts with L11 and the large rRNA to form the base of the stalk. The C-terminus forms an elongated spine to which L12 dimers bind in a sequential fashion forming a multimeric L10(L12)X complex.

Functionally, forms part of the ribosomal stalk, playing a central role in the interaction of the ribosome with GTP-bound translation factors. The chain is Large ribosomal subunit protein uL10 from Petrotoga mobilis (strain DSM 10674 / SJ95).